Consider the following 117-residue polypeptide: UPF0122 protein Teth514_1714 (117 aa).

The protein belongs to the UPF0122 family.

Functionally, might take part in the signal recognition particle (SRP) pathway. This is inferred from the conservation of its genetic proximity to ftsY/ffh. May be a regulatory protein. The polypeptide is UPF0122 protein Teth514_1714 (Thermoanaerobacter sp. (strain X514)).